Reading from the N-terminus, the 438-residue chain is Metacaspase-1B (438 aa).

Residues 1–125 (MYYHHSHQGW…SQHFGRGAPS (125 aa)) form a disordered region. Residues 29-38 (PYPYSSNAQY) are compositionally biased toward low complexity. Residues 39–74 (QPPPGPPPTSHYAPPPGPPPSHYYPPPGSYPSPAPS) show a composition bias toward pro residues. Residues H222 and C278 contribute to the active site.

It belongs to the peptidase C14B family.

Its function is as follows. Involved in cell death (apoptosis). The protein is Metacaspase-1B (casB) of Aspergillus niger (strain ATCC MYA-4892 / CBS 513.88 / FGSC A1513).